We begin with the raw amino-acid sequence, 651 residues long: Protein transport protein SEC9 (651 aa).

3 disordered regions span residues 1–22 (MGLK…QNKD), 53–299 (AEDK…QAPM), and 313–332 (RNSE…DFEE). Residues Ser-79 and Ser-92 each carry the phosphoserine modification. Residues 86 to 112 (NEATAGSNRGSSGTQDLGNGAESNSMQ) show a composition bias toward polar residues. Residues 120–129 (DDYRYDDDPY) are compositionally biased toward basic and acidic residues. Polar residues-rich tracts occupy residues 157-218 (GTSL…SLDQ) and 244-284 (DSNT…ANPY). Residues Ser-186, Ser-190, Ser-213, Ser-271, and Ser-273 each carry the phosphoserine modification. Positions 285–296 (SSRSVRQPQSQQ) are enriched in low complexity. Over residues 313 to 327 (RNSEVDLNEEPRTGE) the composition is skewed to basic and acidic residues. Ser-315 carries the phosphoserine modification. Thr-355 is modified (phosphothreonine). A Phosphoserine modification is found at Ser-359. T-SNARE coiled-coil homology domains lie at 434-496 (KFTK…VAEL) and 588-650 (DEME…LAGI).

This sequence belongs to the SNAP-25 family. Interacts with SRO7 and SRO77.

Component of a SNARE complex that may be the effector of SEC4 function in exocytosis. This chain is Protein transport protein SEC9 (SEC9), found in Saccharomyces cerevisiae (strain ATCC 204508 / S288c) (Baker's yeast).